The chain runs to 364 residues: Chorismate synthase (364 aa).

NADP(+) contacts are provided by R48 and R54. Residues R125–S127, N238–A239, G278, K293–S297, and R319 contribute to the FMN site.

This sequence belongs to the chorismate synthase family. Homotetramer. Requires FMNH2 as cofactor.

The enzyme catalyses 5-O-(1-carboxyvinyl)-3-phosphoshikimate = chorismate + phosphate. It functions in the pathway metabolic intermediate biosynthesis; chorismate biosynthesis; chorismate from D-erythrose 4-phosphate and phosphoenolpyruvate: step 7/7. Catalyzes the anti-1,4-elimination of the C-3 phosphate and the C-6 proR hydrogen from 5-enolpyruvylshikimate-3-phosphate (EPSP) to yield chorismate, which is the branch point compound that serves as the starting substrate for the three terminal pathways of aromatic amino acid biosynthesis. This reaction introduces a second double bond into the aromatic ring system. In Shewanella frigidimarina (strain NCIMB 400), this protein is Chorismate synthase.